The chain runs to 488 residues: Nitrogen metabolite repression protein nmr (488 aa).

Residues 1 to 45 (MPAEILSELPLRPAPRDIKIPNAMHNEERRHKHSRSSYSEMSPLM) form a disordered region. Residues 14–29 (APRDIKIPNAMHNEER) are compositionally biased toward basic and acidic residues. Polar residues predominate over residues 36 to 45 (SSYSEMSPLM). Residues 71-76 (NAAGRQ), N165, K215, and 237-240 (YNNN) each bind NADP(+). NAD(+)-binding positions include 75–76 (RQ), 165–167 (NTT), K215, and 237–240 (YNNN). Positions 412 to 488 (EEYDGGGGNN…NKRADEEWLA (77 aa)) are dispensable for NMR function. A disordered region spans residues 422–488 (IGNNHNNHHQ…NKRADEEWLA (67 aa)). The span at 438–459 (HQNGHQNGHNGINGHIVNGGVD) shows a compositional bias: low complexity. Positions 460-473 (SESEEEDSDSDDEG) are enriched in acidic residues.

The protein belongs to the NmrA-type oxidoreductase family. Interacts with nit-2.

It is found in the nucleus. In terms of biological role, may be a redox sensor protein. Negative transcriptional regulator involved in the post-transcriptional modulation of the GATA-type transcription factor nit-2, forming part of a system controlling nitrogen metabolite repression. The protein is Nitrogen metabolite repression protein nmr (nmr) of Neurospora crassa (strain ATCC 24698 / 74-OR23-1A / CBS 708.71 / DSM 1257 / FGSC 987).